The primary structure comprises 353 residues: Photosystem II protein D1 (353 aa).

Thr-2 carries the N-acetylthreonine modification. Thr-2 carries the post-translational modification Phosphothreonine. Helical transmembrane passes span 29-46, 118-133, and 142-156; these read YIGW…TATS, HFLL…EWEL, and WIAV…AATA. His-118 contributes to the chlorophyll a binding site. Tyr-126 lines the pheophytin a pocket. Residues Asp-170 and Glu-189 each coordinate [CaMn4O5] cluster. Residues 197 to 218 form a helical membrane-spanning segment; it reads FHMLGVAGVFGGSLFSAMHGSL. Residue His-198 coordinates chlorophyll a. A quinone-binding positions include His-215 and 264 to 265; that span reads SF. His-215 is a binding site for Fe cation. His-272 provides a ligand contact to Fe cation. A helical membrane pass occupies residues 274-288; that stretch reads LLAAWPVVGIWFTAL. The [CaMn4O5] cluster site is built by His-332, Glu-333, Asp-342, and Ala-344. A propeptide spanning residues 345–353 is cleaved from the precursor; that stretch reads AVEAPSTNG.

This sequence belongs to the reaction center PufL/M/PsbA/D family. As to quaternary structure, PSII is composed of 1 copy each of membrane proteins PsbA, PsbB, PsbC, PsbD, PsbE, PsbF, PsbH, PsbI, PsbJ, PsbK, PsbL, PsbM, PsbT, PsbX, PsbY, PsbZ, Psb30/Ycf12, at least 3 peripheral proteins of the oxygen-evolving complex and a large number of cofactors. It forms dimeric complexes. It depends on The D1/D2 heterodimer binds P680, chlorophylls that are the primary electron donor of PSII, and subsequent electron acceptors. It shares a non-heme iron and each subunit binds pheophytin, quinone, additional chlorophylls, carotenoids and lipids. D1 provides most of the ligands for the Mn4-Ca-O5 cluster of the oxygen-evolving complex (OEC). There is also a Cl(-1) ion associated with D1 and D2, which is required for oxygen evolution. The PSII complex binds additional chlorophylls, carotenoids and specific lipids. as a cofactor. Tyr-161 forms a radical intermediate that is referred to as redox-active TyrZ, YZ or Y-Z. Post-translationally, C-terminally processed by CTPA; processing is essential to allow assembly of the oxygen-evolving complex and thus photosynthetic growth.

It is found in the plastid. Its subcellular location is the chloroplast thylakoid membrane. The enzyme catalyses 2 a plastoquinone + 4 hnu + 2 H2O = 2 a plastoquinol + O2. In terms of biological role, photosystem II (PSII) is a light-driven water:plastoquinone oxidoreductase that uses light energy to abstract electrons from H(2)O, generating O(2) and a proton gradient subsequently used for ATP formation. It consists of a core antenna complex that captures photons, and an electron transfer chain that converts photonic excitation into a charge separation. The D1/D2 (PsbA/PsbD) reaction center heterodimer binds P680, the primary electron donor of PSII as well as several subsequent electron acceptors. The protein is Photosystem II protein D1 of Dioscorea elephantipes (Elephant's foot yam).